Reading from the N-terminus, the 274-residue chain is Probable formate transporter (274 aa).

7 helical membrane passes run 31 to 51, 62 to 82, 118 to 138, 176 to 196, 200 to 220, 226 to 246, and 248 to 268; these read IVLS…AEVV, AGLV…LVVI, VFNL…TGIL, AFWR…LAIA, IIGK…IGFE, MFFI…FFMN, and LIPV…CLYW.

It belongs to the FNT transporter (TC 1.A.16) family.

It localises to the cell membrane. In terms of biological role, may act as a formate transporter. This Methanothermobacter thermautotrophicus (Methanobacterium thermoformicicum) protein is Probable formate transporter (fdhC).